The following is a 458-amino-acid chain: Tyrosine phenol-lyase (458 aa).

Lys-258 is modified (N6-(pyridoxal phosphate)lysine).

It belongs to the beta-eliminating lyase family. Homotetramer. Requires pyridoxal 5'-phosphate as cofactor.

The catalysed reaction is L-tyrosine + H2O = phenol + pyruvate + NH4(+). The sequence is that of Tyrosine phenol-lyase (tpl) from Symbiobacterium thermophilum (strain DSM 24528 / JCM 14929 / IAM 14863 / T).